Here is an 86-residue protein sequence, read N- to C-terminus: MKFLLIGLIRFYQYAISPLIGPRCRFYPSCSHYTLEAIRVHGALRGGYLGARRLLRCHPWHPGGYDPVPERQEQACACHRTAKPGK.

The protein belongs to the UPF0161 family.

The protein resides in the cell inner membrane. In terms of biological role, could be involved in insertion of integral membrane proteins into the membrane. In Pseudomonas aeruginosa (strain LESB58), this protein is Putative membrane protein insertion efficiency factor.